The following is a 204-amino-acid chain: uncharacterized protein (204 aa).

The tract at residues 1 to 20 (MQNPLPEVMSPEHDKRTTTP) is disordered.

This is an uncharacterized protein from Frog virus 3 (isolate Goorha) (FV-3).